Here is a 118-residue protein sequence, read N- to C-terminus: UPF0342 protein LCK_01004 (118 aa).

Belongs to the UPF0342 family.

The polypeptide is UPF0342 protein LCK_01004 (Leuconostoc citreum (strain KM20)).